The chain runs to 417 residues: Histidine--tRNA ligase (417 aa).

Belongs to the class-II aminoacyl-tRNA synthetase family. As to quaternary structure, homodimer.

It localises to the cytoplasm. It carries out the reaction tRNA(His) + L-histidine + ATP = L-histidyl-tRNA(His) + AMP + diphosphate + H(+). The protein is Histidine--tRNA ligase of Nitratidesulfovibrio vulgaris (strain ATCC 29579 / DSM 644 / CCUG 34227 / NCIMB 8303 / VKM B-1760 / Hildenborough) (Desulfovibrio vulgaris).